The following is a 539-amino-acid chain: GMP synthase [glutamine-hydrolyzing] (539 aa).

Residues 4-202 (KILILDFGSQ…VLGICRAKAD (199 aa)) form the Glutamine amidotransferase type-1 domain. Cysteine 81 functions as the Nucleophile in the catalytic mechanism. Residues histidine 176 and glutamate 178 contribute to the active site. One can recognise a GMPS ATP-PPase domain in the interval 203 to 395 (WVMKDHIEEA…LGLPPEMVYR (193 aa)). 230–236 (SGGVDSS) serves as a coordination point for ATP.

In terms of assembly, homodimer.

It catalyses the reaction XMP + L-glutamine + ATP + H2O = GMP + L-glutamate + AMP + diphosphate + 2 H(+). The protein operates within purine metabolism; GMP biosynthesis; GMP from XMP (L-Gln route): step 1/1. Functionally, catalyzes the synthesis of GMP from XMP. This is GMP synthase [glutamine-hydrolyzing] from Cupriavidus pinatubonensis (strain JMP 134 / LMG 1197) (Cupriavidus necator (strain JMP 134)).